Here is a 1391-residue protein sequence, read N- to C-terminus: Nuclear pore complex protein Nup155 (1391 aa).

The O-linked (GlcNAc) serine glycan is linked to S526. 2 disordered regions span residues 604 to 630 and 985 to 1012; these read SSSP…AQPP and QSKA…NMLS. Phosphoserine is present on S1057.

This sequence belongs to the non-repetitive/WGA-negative nucleoporin family. Interacts with GLE1 and NUP35/NUP53. Able to form a heterotrimer with GLE1 and NUP42 in vitro. Forms a complex with NUP35, NUP93, NUP205 and lamin B. In terms of processing, phosphorylated. Phosphorylation and dephosphorylation may be important for the function of NUP155 and may play a role in the reversible disassembly of the nuclear pore complex during mitosis. Disulfide-linked to NUP62. The inner channel of the NPC has a different redox environment from the cytoplasm and allows the formation of interchain disulfide bonds between some nucleoporins, the significant increase of these linkages upon oxidative stress reduces the permeability of the NPC.

It localises to the nucleus. It is found in the nuclear pore complex. The protein localises to the nucleus membrane. Essential component of nuclear pore complex. Could be essessential for embryogenesis. Nucleoporins may be involved both in binding and translocating proteins during nucleocytoplasmic transport. This chain is Nuclear pore complex protein Nup155 (Nup155), found in Mus musculus (Mouse).